The primary structure comprises 276 residues: 2-dehydro-3-deoxyphosphooctonate aldolase (276 aa).

It belongs to the KdsA family.

It localises to the cytoplasm. The enzyme catalyses D-arabinose 5-phosphate + phosphoenolpyruvate + H2O = 3-deoxy-alpha-D-manno-2-octulosonate-8-phosphate + phosphate. Its pathway is carbohydrate biosynthesis; 3-deoxy-D-manno-octulosonate biosynthesis; 3-deoxy-D-manno-octulosonate from D-ribulose 5-phosphate: step 2/3. It functions in the pathway bacterial outer membrane biogenesis; lipopolysaccharide biosynthesis. The protein is 2-dehydro-3-deoxyphosphooctonate aldolase of Xanthomonas campestris pv. campestris (strain 8004).